Reading from the N-terminus, the 46-residue chain is U2-plectoxin-Pt1a (46 aa).

Contains 4 disulfide bonds. Expressed by the venom gland.

The protein resides in the secreted. Potent toxin that may paralyze and/or kill insect pests such as H.virescens (lepidoptera), S.exigua (beet armyworm) and M.sexta (tobacco hornworm). This Plectreurys tristis (Spider) protein is U2-plectoxin-Pt1a.